The following is a 283-amino-acid chain: S-methyl-5'-thioadenosine phosphorylase (283 aa).

Residue threonine 18 participates in phosphate binding. Lysine 51 carries the N6-acetyllysine modification. Residues arginine 60–histidine 61 and threonine 93–alanine 94 contribute to the phosphate site. Methionine 196 is a binding site for substrate. Threonine 197 is a phosphate binding site. Aspartate 220 to aspartate 222 lines the substrate pocket.

Belongs to the PNP/MTAP phosphorylase family. MTAP subfamily. In terms of assembly, homotrimer. In terms of tissue distribution, ubiquitously expressed.

The protein localises to the cytoplasm. Its subcellular location is the nucleus. It catalyses the reaction S-methyl-5'-thioadenosine + phosphate = 5-(methylsulfanyl)-alpha-D-ribose 1-phosphate + adenine. Its pathway is amino-acid biosynthesis; L-methionine biosynthesis via salvage pathway; S-methyl-5-thio-alpha-D-ribose 1-phosphate from S-methyl-5'-thioadenosine (phosphorylase route): step 1/1. With respect to regulation, inhibited by 5'-methylthiotubercin and 5'-chloroformycin. Its function is as follows. Catalyzes the reversible phosphorylation of S-methyl-5'-thioadenosine (MTA) to adenine and 5-methylthioribose-1-phosphate. Involved in the breakdown of MTA, a major by-product of polyamine biosynthesis. Responsible for the first step in the methionine salvage pathway after MTA has been generated from S-adenosylmethionine. Has broad substrate specificity with 6-aminopurine nucleosides as preferred substrates. The protein is S-methyl-5'-thioadenosine phosphorylase of Homo sapiens (Human).